The chain runs to 181 residues: Protein Syd (181 aa).

The protein belongs to the Syd family.

It localises to the cell inner membrane. In terms of biological role, interacts with the SecY protein in vivo. May bind preferentially to an uncomplexed state of SecY, thus functioning either as a chelating agent for excess SecY in the cell or as a regulatory factor that negatively controls the translocase function. The chain is Protein Syd from Enterobacter sp. (strain 638).